A 662-amino-acid chain; its full sequence is PAN2-PAN3 deadenylation complex subunit PAN3 (662 aa).

2 disordered regions span residues 1-29 (MASA…NAKD) and 53-133 (DPHK…DTVT). Residues 26 to 55 (NAKDTLCRNITIYGRCRYEDKGCAFNHDPH) form a C3H1-type zinc finger. The span at 75 to 102 (SFTPSLLSSNGSSPTSTPATTKKMTTIS) shows a compositional bias: low complexity. Residues 115 to 133 (SVVSRSNASTPGLRQDTVT) are compositionally biased toward polar residues. The pseudokinase domain stretch occupies residues 263 to 525 (QTLPNTQLPA…NIDVFITGIS (263 aa)). ATP contacts are provided by residues Arg315, 364–371 (DYHPLSKT), and 425–426 (SK). Residues 526–564 (SQLMSTFDSALHLDDQLTSDLSRELENGRLVRLMAKLNF) adopt a coiled-coil conformation. The tract at residues 565–662 (VNERPEYEHD…ALMKPARRMH (98 aa)) is knob domain.

This sequence belongs to the protein kinase superfamily. PAN3 family. As to quaternary structure, homodimer. Forms a heterotrimer with a catalytic subunit pan2 to form the poly(A)-nuclease (PAN) deadenylation complex. Interacts (via PAM-2 motif) with poly(A)-binding protein pab1 (via PABC domain), conferring substrate specificity of the enzyme complex.

The protein resides in the cytoplasm. In terms of biological role, regulatory subunit of the poly(A)-nuclease (PAN) deadenylation complex, one of two cytoplasmic mRNA deadenylases involved in mRNA turnover. PAN specifically shortens poly(A) tails of RNA and the activity is stimulated by poly(A)-binding protein pab1. PAN deadenylation is followed by rapid degradation of the shortened mRNA tails by the CCR4-NOT complex. Deadenylated mRNAs are then degraded by two alternative mechanisms, namely exosome-mediated 3'-5' exonucleolytic degradation, or deadenylation-dependent mRNA decaping and subsequent 5'-3' exonucleolytic degradation by xrn1. May also be involved in post-transcriptional maturation of mRNA poly(A) tails. pan3 acts as a positive regulator for PAN activity, recruiting the catalytic subunit pan2 to mRNA via its interaction with RNA and with pab1. The chain is PAN2-PAN3 deadenylation complex subunit PAN3 from Aspergillus fumigatus (strain ATCC MYA-4609 / CBS 101355 / FGSC A1100 / Af293) (Neosartorya fumigata).